We begin with the raw amino-acid sequence, 365 residues long: Caffeic acid 3-O-methyltransferase (365 aa).

Residue 130–136 coordinates substrate; that stretch reads MNQDKVL. The tract at residues 162 to 180 is substrate binding; sequence AFDYHGTDPRFNKVFNKGM. Residues Gly-208, Asp-231, Asp-251, Met-252, and Lys-265 each contribute to the S-adenosyl-L-methionine site. His-269 acts as the Proton acceptor in catalysis.

This sequence belongs to the class I-like SAM-binding methyltransferase superfamily. Cation-independent O-methyltransferase family. COMT subfamily. In terms of assembly, homodimer.

It catalyses the reaction (E)-caffeate + S-adenosyl-L-methionine = (E)-ferulate + S-adenosyl-L-homocysteine + H(+). Its pathway is aromatic compound metabolism; phenylpropanoid biosynthesis. Its function is as follows. Catalyzes the conversion of caffeic acid to ferulic acid and of 5-hydroxyferulic acid to sinapic acid. The resulting products may subsequently be converted to the corresponding alcohols that are incorporated into lignins. The polypeptide is Caffeic acid 3-O-methyltransferase (COMT1) (Rosa chinensis (China rose)).